The chain runs to 156 residues: Large ribosomal subunit protein uL15 (156 aa).

The tract at residues 1–56 (MDLSNLKPAEGATQAGQRLGRGEGSGRGGHSSTRGTKGQSSRSGSGTRPIWFEGGQ) is disordered.

Belongs to the universal ribosomal protein uL15 family. Part of the 50S ribosomal subunit.

Its function is as follows. Binds to the 23S rRNA. This Salinibacter ruber (strain DSM 13855 / M31) protein is Large ribosomal subunit protein uL15.